The primary structure comprises 79 residues: Large ribosomal subunit protein uL22 (79 aa).

The protein belongs to the universal ribosomal protein uL22 family. In terms of assembly, part of the 50S ribosomal subunit.

Its function is as follows. This protein binds specifically to 23S rRNA; its binding is stimulated by other ribosomal proteins, e.g. L4, L17, and L20. It is important during the early stages of 50S assembly. It makes multiple contacts with different domains of the 23S rRNA in the assembled 50S subunit and ribosome. The globular domain of the protein is located near the polypeptide exit tunnel on the outside of the subunit, while an extended beta-hairpin is found that lines the wall of the exit tunnel in the center of the 70S ribosome. This chain is Large ribosomal subunit protein uL22 (rplV), found in Prunus armeniaca phytoplasma.